The chain runs to 171 residues: uncharacterized protein (171 aa).

The 169-residue stretch at 3 to 171 folds into the PfpI endopeptidase domain; it reads KKVAIILANE…FNREIVKQLQ (169 aa).

This sequence belongs to the peptidase C56 family.

This is an uncharacterized protein from Staphylococcus aureus (strain MRSA252).